A 205-amino-acid chain; its full sequence is Cytochrome c biogenesis ATP-binding export protein CcmA 1 (205 aa).

Residues 2–205 enclose the ABC transporter domain; that stretch reads LEARDLYCER…LALTGGGAGL (204 aa). Residue 34–41 coordinates ATP; that stretch reads GGNGAGKT.

The protein belongs to the ABC transporter superfamily. CcmA exporter (TC 3.A.1.107) family. The complex is composed of two ATP-binding proteins (CcmA) and two transmembrane proteins (CcmB).

The protein resides in the cell inner membrane. The enzyme catalyses heme b(in) + ATP + H2O = heme b(out) + ADP + phosphate + H(+). Functionally, part of the ABC transporter complex CcmAB involved in the biogenesis of c-type cytochromes; once thought to export heme, this seems not to be the case, but its exact role is uncertain. Responsible for energy coupling to the transport system. The sequence is that of Cytochrome c biogenesis ATP-binding export protein CcmA 1 from Salmonella typhimurium (strain LT2 / SGSC1412 / ATCC 700720).